The following is a 256-amino-acid chain: Ribosomal RNA large subunit methyltransferase E (256 aa).

The S-adenosyl-L-methionine site is built by G50, W52, D69, D85, and D108. Catalysis depends on K148, which acts as the Proton acceptor. The 59-residue stretch at 195-253 (SLRKGDVVDVTIDAMGKTGDGIAHVDDFVVFVKGGSVGDKLKIKITDVKPSFAFADIVE) folds into the TRAM domain.

It belongs to the class I-like SAM-binding methyltransferase superfamily. RNA methyltransferase RlmE family.

The protein resides in the cytoplasm. The catalysed reaction is uridine(2552) in 23S rRNA + S-adenosyl-L-methionine = 2'-O-methyluridine(2552) in 23S rRNA + S-adenosyl-L-homocysteine + H(+). Its function is as follows. Specifically methylates the uridine in position 2552 of 23S rRNA at the 2'-O position of the ribose in the fully assembled 50S ribosomal subunit. The protein is Ribosomal RNA large subunit methyltransferase E of Methanocella arvoryzae (strain DSM 22066 / NBRC 105507 / MRE50).